A 124-amino-acid chain; its full sequence is Small ribosomal subunit protein uS12 (124 aa).

A 3-methylthioaspartic acid modification is found at aspartate 89.

The protein belongs to the universal ribosomal protein uS12 family. As to quaternary structure, part of the 30S ribosomal subunit. Contacts proteins S8 and S17. May interact with IF1 in the 30S initiation complex.

Functionally, with S4 and S5 plays an important role in translational accuracy. In terms of biological role, interacts with and stabilizes bases of the 16S rRNA that are involved in tRNA selection in the A site and with the mRNA backbone. Located at the interface of the 30S and 50S subunits, it traverses the body of the 30S subunit contacting proteins on the other side and probably holding the rRNA structure together. The combined cluster of proteins S8, S12 and S17 appears to hold together the shoulder and platform of the 30S subunit. This is Small ribosomal subunit protein uS12 from Pectobacterium atrosepticum (strain SCRI 1043 / ATCC BAA-672) (Erwinia carotovora subsp. atroseptica).